Consider the following 757-residue polypeptide: Polyribonucleotide nucleotidyltransferase (757 aa).

Residues Asp-489 and Asp-495 each contribute to the Mg(2+) site. The region spanning 556–615 (PKILCYKIDKDVVHKVIGSGGKTIRGISSDTSAKIDIDQNNYVYIMADTEEALMEAKTRV) is the KH domain. An S1 motif domain is found at 632–700 (GELYDGKIVS…SDGKIKLTMR (69 aa)). Positions 702 to 757 (DEDRVGSGGSSSSPKKRFGAHPRKNGKDNRSNNSERGFNERSGSAEGSSISRKRFF) are disordered. A compositionally biased stretch (basic residues) spans 715-725 (PKKRFGAHPRK). Residues 732 to 751 (SNNSERGFNERSGSAEGSSI) are compositionally biased toward polar residues.

The protein belongs to the polyribonucleotide nucleotidyltransferase family. It depends on Mg(2+) as a cofactor.

It is found in the cytoplasm. It carries out the reaction RNA(n+1) + phosphate = RNA(n) + a ribonucleoside 5'-diphosphate. Involved in mRNA degradation. Catalyzes the phosphorolysis of single-stranded polyribonucleotides processively in the 3'- to 5'-direction. In Neorickettsia sennetsu (strain ATCC VR-367 / Miyayama) (Ehrlichia sennetsu), this protein is Polyribonucleotide nucleotidyltransferase.